The following is a 291-amino-acid chain: Tryptophan 2,3-dioxygenase (291 aa).

Substrate contacts are provided by residues 51–55 (FIIQH), Y113, and R117. Residue H240 coordinates heme. Position 254 (T254) interacts with substrate.

The protein belongs to the tryptophan 2,3-dioxygenase family. Homotetramer. Requires heme as cofactor.

The enzyme catalyses L-tryptophan + O2 = N-formyl-L-kynurenine. Its pathway is amino-acid degradation; L-tryptophan degradation via kynurenine pathway; L-kynurenine from L-tryptophan: step 1/2. Functionally, heme-dependent dioxygenase that catalyzes the oxidative cleavage of the L-tryptophan (L-Trp) pyrrole ring and converts L-tryptophan to N-formyl-L-kynurenine. Catalyzes the oxidative cleavage of the indole moiety. This Myxococcus xanthus (strain DK1622) protein is Tryptophan 2,3-dioxygenase.